A 149-amino-acid polypeptide reads, in one-letter code: UPF0310 protein msl3206 (149 aa).

The protein belongs to the UPF0310 family.

This is UPF0310 protein msl3206 from Mesorhizobium japonicum (strain LMG 29417 / CECT 9101 / MAFF 303099) (Mesorhizobium loti (strain MAFF 303099)).